A 134-amino-acid chain; its full sequence is Endoribonuclease YbeY (134 aa).

Zn(2+) is bound by residues His94, His98, and His104.

This sequence belongs to the endoribonuclease YbeY family. Zn(2+) is required as a cofactor.

Its subcellular location is the cytoplasm. Its function is as follows. Single strand-specific metallo-endoribonuclease involved in late-stage 70S ribosome quality control and in maturation of the 3' terminus of the 16S rRNA. The sequence is that of Endoribonuclease YbeY from Campylobacter fetus subsp. fetus (strain 82-40).